We begin with the raw amino-acid sequence, 303 residues long: MATH domain and coiled-coil domain-containing protein At3g58250 (303 aa).

Residues 8-135 enclose the MATH domain; sequence KKKFSWVIKN…KGELKIVVEI (128 aa). Positions 231–287 form a coiled coil; sequence KLDWLKKKLDQVTQKKEKEAAGETRMHEIGEELKDLKLKCSDLEAQLDKEKADVLAA.

This is MATH domain and coiled-coil domain-containing protein At3g58250 from Arabidopsis thaliana (Mouse-ear cress).